The following is a 544-amino-acid chain: Dynein intermediate chain 1 (544 aa).

6 WD repeats span residues 241 to 281, 289 to 330, 342 to 387, 402 to 441, 461 to 501, and 506 to 544; these read KARS…YPVS, GHLE…RPSE, SQCI…QPSN, VMTS…NQHE, THKA…EAPV, and PDGK…NLAN.

It belongs to the dynein intermediate chain family.

It localises to the cytoplasm. Its function is as follows. Has a role in meiotic nuclear divsion where it promotes the movement of 'horsetails'. The sequence is that of Dynein intermediate chain 1 (dic1) from Schizosaccharomyces pombe (strain 972 / ATCC 24843) (Fission yeast).